A 284-amino-acid chain; its full sequence is 2-dehydro-3-deoxyphosphooctonate aldolase (284 aa).

It belongs to the KdsA family.

The protein resides in the cytoplasm. It carries out the reaction D-arabinose 5-phosphate + phosphoenolpyruvate + H2O = 3-deoxy-alpha-D-manno-2-octulosonate-8-phosphate + phosphate. Its pathway is carbohydrate biosynthesis; 3-deoxy-D-manno-octulosonate biosynthesis; 3-deoxy-D-manno-octulosonate from D-ribulose 5-phosphate: step 2/3. It functions in the pathway bacterial outer membrane biogenesis; lipopolysaccharide biosynthesis. In Burkholderia cenocepacia (strain ATCC BAA-245 / DSM 16553 / LMG 16656 / NCTC 13227 / J2315 / CF5610) (Burkholderia cepacia (strain J2315)), this protein is 2-dehydro-3-deoxyphosphooctonate aldolase.